Consider the following 386-residue polypeptide: Galactokinase (386 aa).

Residue E35–D38 coordinates substrate. Residue G125–S131 participates in ATP binding. S131 and E163 together coordinate Mg(2+). The active-site Proton acceptor is D175. Y224 serves as a coordination point for substrate.

The protein belongs to the GHMP kinase family. GalK subfamily.

Its subcellular location is the cytoplasm. The enzyme catalyses alpha-D-galactose + ATP = alpha-D-galactose 1-phosphate + ADP + H(+). The protein operates within carbohydrate metabolism; galactose metabolism. In terms of biological role, catalyzes the transfer of the gamma-phosphate of ATP to D-galactose to form alpha-D-galactose-1-phosphate (Gal-1-P). In Vibrio cholerae serotype O1 (strain ATCC 39315 / El Tor Inaba N16961), this protein is Galactokinase.